Here is a 325-residue protein sequence, read N- to C-terminus: Oligopeptide transport system permease protein OppB (325 aa).

6 helical membrane-spanning segments follow: residues 12–32, 102–122, 135–155, 189–208, 248–268, and 290–310; these read YLVL…LAFS, LVVG…WGAI, LALL…ILGA, LQHL…AGFS, IPMA…AVFV, and TNIV…AGLL. An ABC transmembrane type-1 domain is found at 95 to 311; sequence IGVSLRLLVV…AVVLLAGLLS (217 aa).

This sequence belongs to the binding-protein-dependent transport system permease family. OppBC subfamily. The complex is composed of an ATP-binding protein (OppD), two transmembrane proteins (OppB and OppC) and a solute-binding protein (OppA).

It localises to the cell inner membrane. Its function is as follows. Part of the ABC transporter complex OppABCD involved in the uptake of oligopeptides. Responsible for the translocation of the substrate across the membrane. The chain is Oligopeptide transport system permease protein OppB from Mycobacterium bovis (strain ATCC BAA-935 / AF2122/97).